The chain runs to 428 residues: Light-independent protochlorophyllide reductase subunit N (428 aa).

Cys-31, Cys-56, and Cys-117 together coordinate [4Fe-4S] cluster.

It belongs to the BchN/ChlN family. Protochlorophyllide reductase is composed of three subunits; BchL, BchN and BchB. Forms a heterotetramer of two BchB and two BchN subunits. [4Fe-4S] cluster is required as a cofactor.

The enzyme catalyses chlorophyllide a + oxidized 2[4Fe-4S]-[ferredoxin] + 2 ADP + 2 phosphate = protochlorophyllide a + reduced 2[4Fe-4S]-[ferredoxin] + 2 ATP + 2 H2O. It participates in porphyrin-containing compound metabolism; bacteriochlorophyll biosynthesis (light-independent). Its function is as follows. Component of the dark-operative protochlorophyllide reductase (DPOR) that uses Mg-ATP and reduced ferredoxin to reduce ring D of protochlorophyllide (Pchlide) to form chlorophyllide a (Chlide). This reaction is light-independent. The NB-protein (BchN-BchB) is the catalytic component of the complex. The protein is Light-independent protochlorophyllide reductase subunit N of Rhodopseudomonas palustris (strain BisB5).